Reading from the N-terminus, the 546-residue chain is Light-independent protochlorophyllide reductase subunit B (546 aa).

D36 contacts [4Fe-4S] cluster. D287 serves as the catalytic Proton donor. Substrate is bound at residue G422 to L423. Residues P443–A501 are disordered.

Belongs to the ChlB/BchB/BchZ family. In terms of assembly, protochlorophyllide reductase is composed of three subunits; BchL, BchN and BchB. Forms a heterotetramer of two BchB and two BchN subunits. [4Fe-4S] cluster is required as a cofactor.

The catalysed reaction is chlorophyllide a + oxidized 2[4Fe-4S]-[ferredoxin] + 2 ADP + 2 phosphate = protochlorophyllide a + reduced 2[4Fe-4S]-[ferredoxin] + 2 ATP + 2 H2O. The protein operates within porphyrin-containing compound metabolism; bacteriochlorophyll biosynthesis (light-independent). Its function is as follows. Component of the dark-operative protochlorophyllide reductase (DPOR) that uses Mg-ATP and reduced ferredoxin to reduce ring D of protochlorophyllide (Pchlide) to form chlorophyllide a (Chlide). This reaction is light-independent. The NB-protein (BchN-BchB) is the catalytic component of the complex. In Rhodospirillum rubrum (strain ATCC 11170 / ATH 1.1.1 / DSM 467 / LMG 4362 / NCIMB 8255 / S1), this protein is Light-independent protochlorophyllide reductase subunit B.